Consider the following 360-residue polypeptide: Transcription elongation factor, mitochondrial (360 aa).

Residues 1–35 constitute a mitochondrion transit peptide; the sequence is MSGSVLFTAGERWRCFLTPSRSSLYWALHNFCCRK.

It belongs to the TEFM family. In terms of assembly, interacts with POLRMT.

It localises to the mitochondrion matrix. The protein resides in the mitochondrion nucleoid. Transcription elongation factor which increases mitochondrial RNA polymerase processivity. Regulates transcription of the mitochondrial genome, including genes important for the oxidative phosphorylation machinery. This chain is Transcription elongation factor, mitochondrial (TEFM), found in Homo sapiens (Human).